Consider the following 132-residue polypeptide: Small ribosomal subunit protein uS8 (132 aa).

This sequence belongs to the universal ribosomal protein uS8 family. As to quaternary structure, part of the 30S ribosomal subunit. Contacts proteins S5 and S12.

Functionally, one of the primary rRNA binding proteins, it binds directly to 16S rRNA central domain where it helps coordinate assembly of the platform of the 30S subunit. In Bacillus velezensis (strain DSM 23117 / BGSC 10A6 / LMG 26770 / FZB42) (Bacillus amyloliquefaciens subsp. plantarum), this protein is Small ribosomal subunit protein uS8.